The following is a 683-amino-acid chain: Long-chain-fatty-acid--CoA ligase 5 (683 aa).

Residues 12-32 (LPTPALICLLTFGTAIFLWLI) traverse the membrane as a helical; Signal-anchor for type III membrane protein segment. The Cytoplasmic segment spans residues 33 to 683 (NRPQPVLPLI…IKSLYESIEE (651 aa)). At K361 the chain carries N6-acetyllysine.

This sequence belongs to the ATP-dependent AMP-binding enzyme family.

It localises to the mitochondrion. The protein localises to the endoplasmic reticulum. The protein resides in the mitochondrion outer membrane. Its subcellular location is the endoplasmic reticulum membrane. It is found in the cell membrane. The enzyme catalyses a long-chain fatty acid + ATP + CoA = a long-chain fatty acyl-CoA + AMP + diphosphate. The catalysed reaction is (5Z,8Z,11Z,14Z)-eicosatetraenoate + ATP + CoA = (5Z,8Z,11Z,14Z)-eicosatetraenoyl-CoA + AMP + diphosphate. It catalyses the reaction hexadecanoate + ATP + CoA = hexadecanoyl-CoA + AMP + diphosphate. It carries out the reaction (E)-hexadec-2-enoate + ATP + CoA = (2E)-hexadecenoyl-CoA + AMP + diphosphate. The enzyme catalyses 15-hydroxy-(5Z,8Z,11Z,13E)-eicosatetraenoate + ATP + CoA = 15-hydroxy-(5Z,8Z,11Z,13E)-eicosatetraenoyl-CoA + AMP + diphosphate. The catalysed reaction is 12-hydroxy-(5Z,8Z,10E,14Z)-eicosatetraenoate + ATP + CoA = 12-hydroxy-(5Z,8Z,10E,14Z)-eicosatetraenoyl-CoA + AMP + diphosphate. It catalyses the reaction 5-hydroxy-(6E,8Z,11Z,14Z)-eicosatetraenoate + ATP + CoA = 5-hydroxy-(6E,8Z,11Z,14Z)-eicosatetraenoyl-CoA + AMP + diphosphate. It carries out the reaction 14,15-epoxy-(5Z,8Z,11Z)-eicosatrienoate + ATP + CoA = 14,15-epoxy-(5Z,8Z,11Z)-eicosatrienoyl-CoA + AMP + diphosphate. The enzyme catalyses 11,12-epoxy-(5Z,8Z,14Z)-eicosatrienoate + ATP + CoA = 11,12-epoxy-(5Z,8Z,14Z)-eicosatrienoyl-CoA + AMP + diphosphate. The catalysed reaction is (9Z)-octadecenoate + ATP + CoA = (9Z)-octadecenoyl-CoA + AMP + diphosphate. Catalyzes the conversion of long-chain fatty acids to their active form acyl-CoAs for both synthesis of cellular lipids, and degradation via beta-oxidation. ACSL5 may activate fatty acids from exogenous sources for the synthesis of triacylglycerol destined for intracellular storage. It was suggested that it may also stimulate fatty acid oxidation. At the villus tip of the crypt-villus axis of the small intestine may sensitize epithelial cells to apoptosis specifically triggered by the death ligand TRAIL. May have a role in the survival of glioma cells. Utilizes a wide range of saturated fatty acids with a preference for C16-C18 unsaturated fatty acids. This Mus musculus (Mouse) protein is Long-chain-fatty-acid--CoA ligase 5.